Reading from the N-terminus, the 191-residue chain is Cell division protein SepF (191 aa).

Over residues 153–178 the composition is skewed to polar residues; sequence FPEEASPSNVSSKKTSQYKFETNTTP. The tract at residues 153–191 is disordered; the sequence is FPEEASPSNVSSKKTSQYKFETNTTPEPAWGESKLSAYN.

The protein belongs to the SepF family. In terms of assembly, homodimer. Interacts with FtsZ.

The protein resides in the cytoplasm. Its function is as follows. Cell division protein that is part of the divisome complex and is recruited early to the Z-ring. Probably stimulates Z-ring formation, perhaps through the cross-linking of FtsZ protofilaments. Its function overlaps with FtsA. The sequence is that of Cell division protein SepF from Prochlorococcus marinus subsp. pastoris (strain CCMP1986 / NIES-2087 / MED4).